Consider the following 106-residue polypeptide: Probable glutaredoxin (106 aa).

Positions 8–106 (IVQKITGADP…AKYLDVQFTQ (99 aa)) constitute a Glutaredoxin domain. Cysteine 28 and cysteine 31 are joined by a disulfide.

The protein belongs to the glutaredoxin family.

It is found in the virion. This is Probable glutaredoxin from Acanthamoeba polyphaga mimivirus (APMV).